We begin with the raw amino-acid sequence, 465 residues long: Cystathionine beta-lyase (465 aa).

Lysine 213 bears the N6-(pyridoxal phosphate)lysine mark.

The protein belongs to the trans-sulfuration enzymes family. The cofactor is pyridoxal 5'-phosphate.

Its subcellular location is the cytoplasm. It localises to the nucleus. The catalysed reaction is L,L-cystathionine + H2O = L-homocysteine + pyruvate + NH4(+). It carries out the reaction an S-substituted L-cysteine + H2O = a thiol + pyruvate + NH4(+). It functions in the pathway amino-acid biosynthesis; L-methionine biosynthesis via de novo pathway; L-homocysteine from L-cystathionine: step 1/1. In Saccharomyces cerevisiae (strain ATCC 204508 / S288c) (Baker's yeast), this protein is Cystathionine beta-lyase (STR3).